We begin with the raw amino-acid sequence, 419 residues long: Elongation factor Tu, chloroplastic (419 aa).

The tr-type G domain occupies Lys10 to Asp214. The interval Gly19–Thr26 is G1. Residue Gly19 to Thr26 participates in GTP binding. Thr26 provides a ligand contact to Mg(2+). The interval Gly60–Asn64 is G2. The G3 stretch occupies residues Asp81–Gly84. GTP is bound by residues Asp81–His85 and Asn136–Asp139. Residues Asn136–Asp139 are G4. Positions Ser174–Leu176 are G5.

The protein belongs to the TRAFAC class translation factor GTPase superfamily. Classic translation factor GTPase family. EF-Tu/EF-1A subfamily.

The protein localises to the plastid. It is found in the chloroplast. It carries out the reaction GTP + H2O = GDP + phosphate + H(+). In terms of biological role, GTP hydrolase that promotes the GTP-dependent binding of aminoacyl-tRNA to the A-site of ribosomes during protein biosynthesis. The sequence is that of Elongation factor Tu, chloroplastic (tufA) from Tetradesmus obliquus (Green alga).